Reading from the N-terminus, the 891-residue chain is MLLGEEDIIQALSTAQTDFLDALAEGPEAVLTFQTRWGVLRASIDSDLPLQPSTLELSDRVSYAIADLAEVLLTQEANNKAIEDDLSNDLVAQFHQYEAFEALEFSENDCEWQENMPPVPPFIGACYEWLLQHLHNPYPSNEGRLTPPSSPRSACSILPSLKPALDTCKTFDDIDRWFSAARIRIGWTHICDTKFGGDKAMMLEAARVMWGSSDEEYEERNFAAGCVSRRSVSPKREEIPSYLKSPHDSIAFQARLPEAHEEPAERHCTPPREPPCLDPDVELAFACMETRAHEMYAHRLEPSELVDTLSASALPREAVNDVECQEAIARAAHEKRQQARREQRQAKNERDAAQMREEQRASYPSPEPSSDDEGEDEDDEESTDAYDSEASDSEDDSDSDTDSHYSQPFASYARGRTSFLSDVSALADDEDEASDDDEDDNVEGDDESEEEEEEEDTTPPPKLAGSKRRADEDIDGQAEEKRLRSASVPHFMYPPSPKSPMVVKRAAHKRPTRRASPSLIRLSPPPAPVTMGPDGVPLGTVPSKTTKAPASTSTTKSSTVQVHIPLPAPSSRSIPSSGIKVTGDPTPWVNWDLNAAVPCGQSKAEYLDSVGSSRPQRRASTSSSSSTSSSLSRTPSLTSLSSLSSGSSVSTCETVGTDSSEPAVHVQASETATEAPIKSAAHVHPLFNPDVWSQYNLDATADVEFHRGKGRKASSFRPAKLLVEAVDLSTSPSQHWTPSVRSRTRLAPSVAAPVTSYHHAAGTVTSPIESSFGQGQLTSILSTGPKAGITRRQTPPAKRRVSPRAQEPVEPSSLVDDIISSGLVVVCKEITPVKAPKKDRRYAERAERRASKANSFDSPDTVRARLAEIEQEAARLEAERLSLQRIASVGG.

Positions 111–189 form a DNA-binding region, homeobox; TALE-type; the sequence is EWQENMPPVP…AARIRIGWTH (79 aa). The segment covering 331–360 has biased composition (basic and acidic residues); sequence AAHEKRQQARREQRQAKNERDAAQMREEQR. Disordered regions lie at residues 331–592, 606–671, 779–812, and 836–861; these read AAHE…VNWD, YLDS…ASET, SILS…VEPS, and PKKD…SPDT. 2 stretches are compositionally biased toward acidic residues: residues 369 to 400 and 427 to 457; these read SSDD…SDSD and ADDE…EEDT. 2 stretches are compositionally biased toward low complexity: residues 542–559 and 612–650; these read PSKT…KSST and SSRP…SSVS. Positions 651-660 are enriched in polar residues; that stretch reads TCETVGTDSS. Basic and acidic residues predominate over residues 841–850; the sequence is RYAERAERRA.

Belongs to the TALE/M-ATYP homeobox family.

It localises to the nucleus. Its function is as follows. Specifies A-alpha-3 mating-type. May regulate the expression of genes specific to the homokaryotic cell type. This chain is Mating-type protein A-alpha Z3, found in Schizophyllum commune (Split gill fungus).